A 93-amino-acid chain; its full sequence is Large ribosomal subunit protein bL27 (93 aa).

Residues 1–10 (MLLKLQIQLF) constitute a propeptide that is removed on maturation.

The protein belongs to the bacterial ribosomal protein bL27 family. The N-terminus is cleaved by ribosomal processing cysteine protease Prp.

The chain is Large ribosomal subunit protein bL27 from Phytoplasma australiense.